The primary structure comprises 342 residues: P21 prophage-derived major head protein (342 aa).

Belongs to the lambda phage major capsid protein family.

In Escherichia coli O6:H1 (strain CFT073 / ATCC 700928 / UPEC), this protein is P21 prophage-derived major head protein.